The primary structure comprises 368 residues: Glutamate 5-kinase (368 aa).

K9 is a binding site for ATP. Substrate is bound by residues S49, D136, and N148. ATP-binding positions include 168-169 (TD) and 210-216 (TGGMMTK). Residues 275 to 353 (AGIITIDNGA…ADIENVLGYE (79 aa)) enclose the PUA domain.

This sequence belongs to the glutamate 5-kinase family.

The protein localises to the cytoplasm. The catalysed reaction is L-glutamate + ATP = L-glutamyl 5-phosphate + ADP. Its pathway is amino-acid biosynthesis; L-proline biosynthesis; L-glutamate 5-semialdehyde from L-glutamate: step 1/2. In terms of biological role, catalyzes the transfer of a phosphate group to glutamate to form L-glutamate 5-phosphate. The protein is Glutamate 5-kinase of Haemophilus influenzae (strain PittEE).